An 883-amino-acid chain; its full sequence is Serine/threonine-protein kinase greatwall (883 aa).

Residue M1 is modified to N-acetylmethionine. Residues 1-23 (MEPTMGGEMESGGGAATGECVNR) are disordered. Residues 35-839 (FTIVKPISRG…MKELKHHPLF (805 aa)) enclose the Protein kinase domain. Residues 41 to 49 (ISRGAFGKV) and K62 each bind ATP. The active-site Proton acceptor is the D156. 2 positions are modified to phosphothreonine: T209 and T224. A Phosphoserine modification is found at S295. A disordered region spans residues 298 to 317 (RLATSSTSSPSHTFISSMES). Residues 301–314 (TSSTSSPSHTFISS) are compositionally biased toward low complexity. Phosphoserine occurs at positions 373 and 456. A disordered region spans residues 511–530 (ENVGSSFTDKHQTPEKSPVP). T523 is subject to Phosphothreonine. Phosphoserine occurs at positions 556 and 560. Residues 569 to 597 (IHMDSDSSFPGISIMESPLGGQSLDPDKN) are disordered. Residues S635, S661, and S672 each carry the phosphoserine modification. The interval 706-737 (RSDMPYQQTPNQVKSETPYRTPKSVRRGAAPV) is disordered. A compositionally biased stretch (polar residues) spans 710-720 (PYQQTPNQVKS). T726 is modified (phosphothreonine). The residue at position 729 (S729) is a Phosphoserine. T745 is subject to Phosphothreonine; by CDK1. Positions 840 to 883 (SGVDWENLQHQKMPFIPQPDDETDTSYFEARNNAQHLTVSGFSL) constitute an AGC-kinase C-terminal domain. A phosphoserine mark is found at S879 and S882.

The protein belongs to the protein kinase superfamily. AGC Ser/Thr protein kinase family. Post-translationally, phosphorylation at Thr-745 by CDK1 during M phase activates its kinase activity. Maximum phosphorylation occurs in prometaphase.

It is found in the cytoplasm. The protein resides in the cytoskeleton. Its subcellular location is the microtubule organizing center. The protein localises to the centrosome. It localises to the nucleus. It catalyses the reaction L-seryl-[protein] + ATP = O-phospho-L-seryl-[protein] + ADP + H(+). It carries out the reaction L-threonyl-[protein] + ATP = O-phospho-L-threonyl-[protein] + ADP + H(+). Serine/threonine kinase that plays a key role in M phase by acting as a regulator of mitosis entry and maintenance. Acts by promoting the inactivation of protein phosphatase 2A (PP2A) during M phase: does not directly inhibit PP2A but acts by mediating phosphorylation and subsequent activation of ARPP19 and ENSA at 'Ser-62' and 'Ser-67', respectively. ARPP19 and ENSA are phosphatase inhibitors that specifically inhibit the PPP2R2D (PR55-delta) subunit of PP2A. Inactivation of PP2A during M phase is essential to keep cyclin-B1-CDK1 activity high. Following DNA damage, it is also involved in checkpoint recovery by being inhibited. This is Serine/threonine-protein kinase greatwall (MASTL) from Bos taurus (Bovine).